The primary structure comprises 659 residues: Serine/threonine-protein kinase StkP (659 aa).

Residues 1 to 342 lie on the Cytoplasmic side of the membrane; it reads MIQIGKIFAG…PQAPKKHRFK (342 aa). The Protein kinase domain occupies 12-273; sequence YRIVKQIGRG…EMYVDLSSSL (262 aa). Residues 18–26 and Lys-42 contribute to the ATP site; that span reads IGRGGMADV. Catalysis depends on Asp-136, which acts as the Proton acceptor. A helical membrane pass occupies residues 343–363; that stretch reads MRYLILLASLVLVAASLIWIL. The Extracellular segment spans residues 364 to 659; sequence SRTPATIAIP…YKPKTTSATP (296 aa). 4 PASTA domains span residues 366–433, 434–505, 506–577, and 578–651; these read TPAT…VVSS, GKQS…TVAK, KATT…TVAK, and KVTS…SIYK. The segment at 541–561 is disordered; that stretch reads EEESSESEPGTIMKQSPGAGT.

This sequence belongs to the protein kinase superfamily. Ser/Thr protein kinase family. In terms of assembly, homodimer. StkP forms dimers through its transmembrane and extracellular domains. Dimer formation likely promotes autophosphorylation activity and might be necessary for targeting StkP substrate. Post-translationally, autophosphorylation occurs predominantly at the threonine residue and weakly at the serine residue. Dephosphorylated by PhpP.

Its subcellular location is the cell membrane. The enzyme catalyses L-seryl-[protein] + ATP = O-phospho-L-seryl-[protein] + ADP + H(+). It catalyses the reaction L-threonyl-[protein] + ATP = O-phospho-L-threonyl-[protein] + ADP + H(+). Its function is as follows. Protein kinase involved in signal transduction pathways that regulate various cellular processes. Likely senses intracellular peptidoglycan subunits present in the cell division septa of actively growing cells; thus, intracellular unlinked peptidoglycan may serve as the signal molecules that trigger StkP phosphorylation activity on a set of substrates. Plays a crucial role in the regulation of cell shape and cell division of S.pneumoniae through control of at least DivIVA activity. Is involved in competence triggering, and is required for the expression of the central competence operon comCDE. StkP also plays an important role for bacterial survival in vivo. Identified target substrates that are specifically phosphorylated by StkP in vivo, mainly on threonine residues, are DivIVA, GlmM, PpaC, MapZ, KhpB (also called EloR/Jag, shown in strains R6 and Rx1) and StkP itself. Autophosphorylated StkP is a substrate for the cotranscribed protein phosphatase PhpP (shown in the avirulent strain Rx / Cp1015); PhpP and StkP appear to constitute a functional signaling couple in vivo. This chain is Serine/threonine-protein kinase StkP (stkP), found in Streptococcus pneumoniae serotype 2 (strain D39 / NCTC 7466).